Reading from the N-terminus, the 550-residue chain is Alkaline phosphatase PhoV (550 aa).

The signal sequence occupies residues 1 to 20 (MKIKLLCISLAVLFCSSANA). 2 residues coordinate Zn(2+): Asp48 and Thr89. The active-site Phosphothreonine intermediate is the Thr89. Residues Asn110 and 171-173 (KDR) contribute to the substrate site. 5 residues coordinate Zn(2+): Asp313, His317, Asp360, His361, and His491.

Zn(2+) is required as a cofactor.

It localises to the cell inner membrane. It catalyses the reaction a phosphate monoester + H2O = an alcohol + phosphate. Subject to competitive inhibition by phosphate. Inhibited by manganese. Magnesium mildly increases enzyme activity when the zinc concentration is suboptimal. Optimal activity is dependent on the presence of 0.01-2% Triton X-100. Triton X-100 at a concentration of 0.05% increases the activity about fivefold relative to that in its absence. The enzyme is even active in Triton X-100 concentrations up to 80%. 50% inhibition by 4 mM EDTA and 50% inhibition by 48 mM sodium citrate. Functionally, alkaline phosphatase with broad substrate specificity. This is Alkaline phosphatase PhoV from Synechococcus elongatus (strain ATCC 33912 / PCC 7942 / FACHB-805) (Anacystis nidulans R2).